The following is a 481-amino-acid chain: Solute carrier family 46 member 2 (481 aa).

The Cytoplasmic portion of the chain corresponds to 1–37 (MGPEAAGPGRGAAPRLQVRTWIEPVVAATQVASSLYE). The helical transmembrane segment at 38 to 58 (AGLLLVVKASFGAGAGAGAGA) threads the bilayer. The Extracellular portion of the chain corresponds to 59 to 83 (ASNHSAGPPRGAPEDQQQRAISNFY). Asn61 carries N-linked (GlcNAc...) asparagine glycosylation. The chain crosses the membrane as a helical span at residues 84–104 (IVYNLVVGLTPLLSAYALGWL). At 105–113 (SDRRHRKVA) the chain is on the cytoplasmic side. A helical membrane pass occupies residues 114–134 (ICVALLGFLLSRVGLLLKVLL). The Extracellular portion of the chain corresponds to 135 to 143 (DWPVEVLYG). Residues 144-164 (AAALNGLCGGFSAFWAGVMAL) form a helical membrane-spanning segment. At 165-179 (GSLGSSEGRRSVRLV) the chain is on the cytoplasmic side. Residues 180–200 (LIDLILGLAGFCGSMASGHLF) traverse the membrane as a helical segment. The Extracellular portion of the chain corresponds to 201-210 (KQVAGHSGQG). A helical transmembrane segment spans residues 211–231 (LVLTACSVSCATFALLYSLLV). The Cytoplasmic portion of the chain corresponds to 232–286 (LKVPEAAAGSGQALSAGDSVAGTVGTYRTLDPDHSDKQSVQGLHPPSPGKAKPRR). A disordered region spans residues 263–282 (PDHSDKQSVQGLHPPSPGKA). The chain crosses the membrane as a helical span at residues 287–307 (TIIALLFLGAIVYDLAVVGTV). The Extracellular segment spans residues 308 to 326 (DVMPLFVLREPLSWNQVQV). A helical transmembrane segment spans residues 327 to 347 (GYGMAAGYTIFITSFLGVLVF). Topologically, residues 348–353 (SRCFQD) are cytoplasmic. Residues 354 to 374 (TTMIMIGMVSFGSGALLLAFV) traverse the membrane as a helical segment. Residues 375 to 376 (KE) are Extracellular-facing. Residues 377 to 397 (TYMFYIARAVMLFALIPITTI) form a helical membrane-spanning segment. The Cytoplasmic segment spans residues 398-412 (RSAMSKLIKGSSYGK). The chain crosses the membrane as a helical span at residues 413–433 (VFVILQLSLTLTGVVTSTVYN). The Extracellular portion of the chain corresponds to 434-446 (KIYQVTMEKFIGT). Residues 447–467 (CFALSSFLSFLAIIPIGIVAY) traverse the membrane as a helical segment. Residues 468–481 (KQASWLQYGDVRET) lie on the Cytoplasmic side of the membrane.

This sequence belongs to the major facilitator superfamily. SLC46A family. Post-translationally, glycosylated. As to expression, highly expressed by the epididymal duct epithelium.

The protein localises to the endosome membrane. It is found in the cell membrane. The catalysed reaction is N-acetyl-beta-D-glucosaminyl-(1-&gt;4)-1,6-anhydro-N-acetyl-beta-D-muramoyl-L-alanyl-gamma-D-glutamyl-meso-2,6-diaminopimeloyl-D-alanine(out) + n H(+)(out) = N-acetyl-beta-D-glucosaminyl-(1-&gt;4)-1,6-anhydro-N-acetyl-beta-D-muramoyl-L-alanyl-gamma-D-glutamyl-meso-2,6-diaminopimeloyl-D-alanine(in) + n H(+)(in). It catalyses the reaction L-alanyl-gamma-D-glutamyl-meso-2,6-diaminopimelate(out) + n H(+)(out) = L-alanyl-gamma-D-glutamyl-meso-2,6-diaminopimelate(in) + n H(+)(in). The enzyme catalyses N-acetyl-D-muramoyl-L-alanyl-D-isoglutamine(out) + n H(+)(out) = N-acetyl-D-muramoyl-L-alanyl-D-isoglutamine(in) + n H(+)(in). It carries out the reaction 2',3'-cGAMP(out) + n H(+)(out) = 2',3'-cGAMP(in) + n H(+)(in). The catalysed reaction is 3',3'-cGAMP(out) + n H(+)(out) = 3',3'-cGAMP(in) + n H(+)(in). Proton-coupled transporter that delivers pathogen-associated or danger-associated molecular patterns to cytosolic pattern recognition receptors as part of the innate immune response to microbes or tissue injury. Has selectivity toward muropeptides that contain the amino acid diaminopimelic acid (DAP-type peptidoglycan muropeptides) including Tri-DAP and tracheal toxin (TCT), common in Gram-negative bacteria and Gram-positive bacilli. In the context of immune recognition of skin microbiota, shuttles bacterial muropeptides across the endolysosomal membranes into the cytosol for recognition by NOD1, triggering MYD88-dependent secretion of IL1A and neutrophil recruitment in a pyroptosis-type inflammatory process. To a lesser extent and redundantly, transports muramyl dipeptides derived from most bacterial proteoglycans, eliciting NOD2 receptor activation and downstream inflammatory responses. Postulated to function as an importer of cyclic GMP-AMP dinucleotides (cGAMPs) in monocyte and macrophage cell lineages. Selectively imports cGAMPs derived from pathogenic bacteria such as 3'3'-cGAMP thus providing for differential immune recognition of pathogenic versus commensal bacteria. During tumorigenesis may transport extracellular tumor-derived 2'3'-cGAMP across the plasma membrane of M1-polarized macrophages to activate the anti-tumoral stimulator of interferon genes (STING) pathway. The transport mechanism, its electrogenicity and stoichiometry remain to be elucidated. The polypeptide is Solute carrier family 46 member 2 (Canis lupus familiaris (Dog)).